The primary structure comprises 430 residues: GTPase Obg (430 aa).

In terms of domain architecture, Obg spans 1-158 (MFVDQVKISL…LEVTLELKLL (158 aa)). Positions 118–145 (RGGRGGRGNSRFATPRNPAPDFSENGEP) are disordered. Positions 159–329 (ADVGLVGFPS…LLYQIADKLE (171 aa)) constitute an OBG-type G domain. GTP-binding positions include 165-172 (GFPSVGKS), 190-194 (FTTIK), 212-215 (DLPG), 282-285 (NKMD), and 310-312 (STI). The Mg(2+) site is built by serine 172 and threonine 192. In terms of domain architecture, OCT spans 352 to 430 (KHTPSADKFT…ILGGEFEFVE (79 aa)).

Belongs to the TRAFAC class OBG-HflX-like GTPase superfamily. OBG GTPase family. As to quaternary structure, monomer. The cofactor is Mg(2+).

It is found in the cytoplasm. In terms of biological role, an essential GTPase which binds GTP, GDP and possibly (p)ppGpp with moderate affinity, with high nucleotide exchange rates and a fairly low GTP hydrolysis rate. Plays a role in control of the cell cycle, stress response, ribosome biogenesis and in those bacteria that undergo differentiation, in morphogenesis control. The chain is GTPase Obg from Staphylococcus epidermidis (strain ATCC 12228 / FDA PCI 1200).